Reading from the N-terminus, the 69-residue chain is Sec-independent protein translocase protein TatA (69 aa).

Residues 1–21 (MFGLGGQELILILMIILLLFG) traverse the membrane as a helical segment. Residues 49 to 69 (EFNKAMDDETPKKKDFGPDRE) form a disordered region.

It belongs to the TatA/E family. As to quaternary structure, forms a complex with TatC.

It is found in the cell inner membrane. Its function is as follows. Part of the twin-arginine translocation (Tat) system that transports large folded proteins containing a characteristic twin-arginine motif in their signal peptide across membranes. TatA could form the protein-conducting channel of the Tat system. In Chlorobium luteolum (strain DSM 273 / BCRC 81028 / 2530) (Pelodictyon luteolum), this protein is Sec-independent protein translocase protein TatA.